The primary structure comprises 262 residues: Pyridoxine 5'-phosphate synthase (262 aa).

N6 is a 3-amino-2-oxopropyl phosphate binding site. 8–9 lines the 1-deoxy-D-xylulose 5-phosphate pocket; that stretch reads DH. R17 provides a ligand contact to 3-amino-2-oxopropyl phosphate. H43 acts as the Proton acceptor in catalysis. 1-deoxy-D-xylulose 5-phosphate is bound by residues R45 and H50. Residue E70 is the Proton acceptor of the active site. Residue T102 coordinates 1-deoxy-D-xylulose 5-phosphate. H215 serves as the catalytic Proton donor. 3-amino-2-oxopropyl phosphate is bound by residues G216 and 237–238; that span reads GH.

It belongs to the PNP synthase family. In terms of assembly, homooctamer; tetramer of dimers.

Its subcellular location is the cytoplasm. It catalyses the reaction 3-amino-2-oxopropyl phosphate + 1-deoxy-D-xylulose 5-phosphate = pyridoxine 5'-phosphate + phosphate + 2 H2O + H(+). It functions in the pathway cofactor biosynthesis; pyridoxine 5'-phosphate biosynthesis; pyridoxine 5'-phosphate from D-erythrose 4-phosphate: step 5/5. In terms of biological role, catalyzes the complicated ring closure reaction between the two acyclic compounds 1-deoxy-D-xylulose-5-phosphate (DXP) and 3-amino-2-oxopropyl phosphate (1-amino-acetone-3-phosphate or AAP) to form pyridoxine 5'-phosphate (PNP) and inorganic phosphate. This Helicobacter acinonychis (strain Sheeba) protein is Pyridoxine 5'-phosphate synthase.